The primary structure comprises 119 residues: Dolichyl-diphosphooligosaccharide--protein glycosyltransferase subunit DAD1 (119 aa).

Position 2 is an N-acetylserine (Ser-2). Over 2-30 (SASVASVISRFLEEYLSSTPQRLKLLDAY) the chain is Cytoplasmic. A helical membrane pass occupies residues 31–51 (LLYILLTGALQFGYCLLVGTF). At 52-54 (PFN) the chain is on the lumenal side. A helical transmembrane segment spans residues 55–75 (SFLSGFISCVGSFILAGNGSL). Over 76–81 (RNRSNN) the chain is Cytoplasmic. Residues 82 to 98 (VFTLVRCFSSLVTLFYS) traverse the membrane as a helical segment. The Lumenal portion of the chain corresponds to 99–119 (RSPPREVPRGACIALFCERGN).

This sequence belongs to the DAD/OST2 family. In terms of assembly, component of the oligosaccharyltransferase (OST) complex. OST exists in two different complex forms which contain common core subunits RPN1, RPN2, OST48, OST4, DAD1 and TMEM258, either STT3A or STT3B as catalytic subunits, and form-specific accessory subunits. STT3A complex assembly occurs through the formation of 3 subcomplexes. Subcomplex 1 contains RPN1 and TMEM258, subcomplex 2 contains the STT3A-specific subunits STT3A, DC2/OSTC, and KCP2 as well as the core subunit OST4, and subcomplex 3 contains RPN2, DAD1, and OST48. The STT3A complex can form stable complexes with the Sec61 complex or with both the Sec61 and TRAP complexes.

The protein resides in the endoplasmic reticulum membrane. It participates in protein modification; protein glycosylation. Subunit of the oligosaccharyl transferase (OST) complex that catalyzes the initial transfer of a defined glycan (Glc(3)Man(9)GlcNAc(2) in eukaryotes) from the lipid carrier dolichol-pyrophosphate to an asparagine residue within an Asn-X-Ser/Thr consensus motif in nascent polypeptide chains, the first step in protein N-glycosylation. N-glycosylation occurs cotranslationally and the complex associates with the Sec61 complex at the channel-forming translocon complex that mediates protein translocation across the endoplasmic reticulum (ER). All subunits are required for a maximal enzyme activity. This chain is Dolichyl-diphosphooligosaccharide--protein glycosyltransferase subunit DAD1, found in Canis lupus familiaris (Dog).